The sequence spans 113 residues: Large ribosomal subunit protein P2B (113 aa).

A disordered region spans residues 66–113 (PSGGGAIDMGAPAAVAGGGAAPAEEAKKEEKVEEKEESDEDMGFSLFD). Positions 89 to 99 (EEAKKEEKVEE) are enriched in basic and acidic residues.

It belongs to the eukaryotic ribosomal protein P1/P2 family. In terms of assembly, P1 and P2 exist as dimers at the large ribosomal subunit. Post-translationally, phosphorylated.

In terms of biological role, plays an important role in the elongation step of protein synthesis. The chain is Large ribosomal subunit protein P2B (RPP2B) from Zea mays (Maize).